Reading from the N-terminus, the 256-residue chain is Phosphonates import ATP-binding protein PhnC (256 aa).

Residues 3 to 247 (LELKNISKTY…VLHKEIFTNV (245 aa)) enclose the ABC transporter domain. 36 to 43 (GLSGAGKS) provides a ligand contact to ATP.

Belongs to the ABC transporter superfamily. Phosphonates importer (TC 3.A.1.9.1) family. The complex is composed of two ATP-binding proteins (PhnC), two transmembrane proteins (PhnE) and a solute-binding protein (PhnD).

Its subcellular location is the cell inner membrane. It catalyses the reaction phosphonate(out) + ATP + H2O = phosphonate(in) + ADP + phosphate + H(+). Part of the ABC transporter complex PhnCDE involved in phosphonates import. Responsible for energy coupling to the transport system. The polypeptide is Phosphonates import ATP-binding protein PhnC (Treponema denticola (strain ATCC 35405 / DSM 14222 / CIP 103919 / JCM 8153 / KCTC 15104)).